We begin with the raw amino-acid sequence, 308 residues long: MTLLALVWLLLDATFLITLLWHLLQGCKSGHSLLCSVFQDLIRYGKTKTGLQRPAWLQWFDIPKRCFWHFYCVSLIWNGCLLWILLRLLLQSVPVPEWLQLVLHFLHAGSEPQILDRELSVILALALLWLHSLRRLLECLFVSVFSNGVIHLVQYCFGLGYYFLIGITVLTYCPLDRRTVSTDNLLTQCHWYHILGLALYIWASLHQYRCHCILAGLRKSASGNVINLNHSVPCGDWFERVSCPHYFAELLIYVSIAVVFGLLNTIWWLVVLYVLLNQALAALLCHEFYHEKFDTYPIHRKAFIPFIF.

Residues 1-2 lie on the Cytoplasmic side of the membrane; that stretch reads MT. Residues 3–23 form a helical membrane-spanning segment; that stretch reads LLALVWLLLDATFLITLLWHL. At 24-65 the chain is on the lumenal side; that stretch reads LQGCKSGHSLLCSVFQDLIRYGKTKTGLQRPAWLQWFDIPKR. The helical transmembrane segment at 66 to 86 threads the bilayer; that stretch reads CFWHFYCVSLIWNGCLLWILL. The Cytoplasmic segment spans residues 87 to 120; that stretch reads RLLLQSVPVPEWLQLVLHFLHAGSEPQILDRELS. A helical transmembrane segment spans residues 121-141; that stretch reads VILALALLWLHSLRRLLECLF. Residues 142-148 lie on the Lumenal side of the membrane; the sequence is VSVFSNG. The chain crosses the membrane as a helical span at residues 149–169; the sequence is VIHLVQYCFGLGYYFLIGITV. Topologically, residues 170–184 are cytoplasmic; the sequence is LTYCPLDRRTVSTDN. The chain crosses the membrane as a helical span at residues 185-205; that stretch reads LLTQCHWYHILGLALYIWASL. Topologically, residues 206 to 255 are lumenal; sequence HQYRCHCILAGLRKSASGNVINLNHSVPCGDWFERVSCPHYFAELLIYVS. The chain crosses the membrane as a helical span at residues 256–276; it reads IAVVFGLLNTIWWLVVLYVLL. Residues 277–308 lie on the Cytoplasmic side of the membrane; the sequence is NQALAALLCHEFYHEKFDTYPIHRKAFIPFIF.

The protein belongs to the steroid 5-alpha reductase family. Polyprenal reductase subfamily.

It is found in the endoplasmic reticulum membrane. The catalysed reaction is a di-trans,poly-cis-dolichal + NADP(+) = a di-trans,poly-cis-polyprenal + NADPH + H(+). The enzyme catalyses a 3-oxo-5alpha-steroid + NADP(+) = a 3-oxo-Delta(4)-steroid + NADPH + H(+). It catalyses the reaction androst-4-ene-3,17-dione + NADPH + H(+) = 5alpha-androstan-3,17-dione + NADP(+). It carries out the reaction 17beta-hydroxy-5alpha-androstan-3-one + NADP(+) = testosterone + NADPH + H(+). Its pathway is protein modification; protein glycosylation. Functionally, plays a key role in early steps of protein N-linked glycosylation by being involved in the conversion of polyprenol into dolichol. Acts as a polyprenal reductase that mediates the reduction of polyprenal into dolichal in a NADP-dependent mechanism. Dolichols are required for the synthesis of dolichol-linked monosaccharides and the oligosaccharide precursor used for N-glycosylation. Also able to convert testosterone (T) into 5-alpha-dihydrotestosterone (DHT). In Xenopus tropicalis (Western clawed frog), this protein is Polyprenal reductase (srd5a3).